The sequence spans 368 residues: UPF0284 protein PCC8801_3324 (368 aa).

This sequence belongs to the UPF0284 family.

The chain is UPF0284 protein PCC8801_3324 from Rippkaea orientalis (strain PCC 8801 / RF-1) (Cyanothece sp. (strain PCC 8801)).